The following is a 375-amino-acid chain: 5-amino-6-(D-ribitylamino)uracil--L-tyrosine 4-hydroxyphenyl transferase 1 (375 aa).

In terms of domain architecture, Radical SAM core spans 50–284 (VTYVVNRNIN…AVSRILFHGH (235 aa)). [4Fe-4S] cluster-binding residues include Cys64, Cys68, and Cys71.

It belongs to the radical SAM superfamily. CofH family. Consists of two subunits, CofG and CofH. Requires [4Fe-4S] cluster as cofactor.

It catalyses the reaction 5-amino-6-(D-ribitylamino)uracil + L-tyrosine + S-adenosyl-L-methionine = 5-amino-5-(4-hydroxybenzyl)-6-(D-ribitylimino)-5,6-dihydrouracil + 2-iminoacetate + 5'-deoxyadenosine + L-methionine + H(+). It functions in the pathway cofactor biosynthesis; coenzyme F0 biosynthesis. Catalyzes the radical-mediated synthesis of 5-amino-5-(4-hydroxybenzyl)-6-(D-ribitylimino)-5,6-dihydrouracil from 5-amino-6-(D-ribitylamino)uracil and L-tyrosine. This chain is 5-amino-6-(D-ribitylamino)uracil--L-tyrosine 4-hydroxyphenyl transferase 1, found in Methanosarcina acetivorans (strain ATCC 35395 / DSM 2834 / JCM 12185 / C2A).